The chain runs to 692 residues: Elongation factor G (692 aa).

The region spanning 8-282 (EKVRNIGIAA…AVVDYLPAPT (275 aa)) is the tr-type G domain. GTP-binding positions include 17 to 24 (AHIDAGKT), 81 to 85 (DTPGH), and 135 to 138 (NKMD).

This sequence belongs to the TRAFAC class translation factor GTPase superfamily. Classic translation factor GTPase family. EF-G/EF-2 subfamily.

Its subcellular location is the cytoplasm. Catalyzes the GTP-dependent ribosomal translocation step during translation elongation. During this step, the ribosome changes from the pre-translocational (PRE) to the post-translocational (POST) state as the newly formed A-site-bound peptidyl-tRNA and P-site-bound deacylated tRNA move to the P and E sites, respectively. Catalyzes the coordinated movement of the two tRNA molecules, the mRNA and conformational changes in the ribosome. This Trichormus variabilis (strain ATCC 29413 / PCC 7937) (Anabaena variabilis) protein is Elongation factor G.